A 512-amino-acid chain; its full sequence is MRLVLLFSCVLAVSSYAEIILAHSDENLLSRTKNNLSKWNENRLYDYGSKSTMSLPVSSLFPALQTLWIGVVADCSYVTHFTSRMEAKKHIFQEFEGVSTLYEDSFNINVQIHSLILPSAHDCSANVVDRPEISMSPRISIEEKLEIFSKWKYESPGNNVFEAISPHERESFPSEPQVSVLFTSSVKRSPHGVSWFATICSETHIENEWHVGPLSVVSAYPNDRLVVAHEIGHILGLIHDCNKKSCGDHSEACCPLSSSLCDAQELYIMNPSNSYTYANLRFSDCSILQLHSLVEKKYVSLSCLSKPSEKSVLRLGTCGNGIVEDGEECDCGEDCENNPCCDGKTCKLTKGSLCDDQQDACCYQCHFKNAGTLCRQSTNPCDKPEFCTGISSKCPVDENWDDGRICQDSLGMGSCASGVCTSASRQCKKLTNFSSLSCHSDSCKVSCQNEDGTCFISAKDYIDGTRCRGGLCYNGVCVPIEGSSASWSKQPSLFCASGTMLISLAVIAWFFW.

The first 15 residues, 1 to 15, serve as a signal peptide directing secretion; the sequence is MRLVLLFSCVLAVSS. N35 carries an N-linked (GlcNAc...) asparagine glycan. The 242-residue stretch at 65–306 folds into the Peptidase M12B domain; it reads QTLWIGVVAD…KYVSLSCLSK (242 aa). H229 contacts Zn(2+). E230 is an active-site residue. Positions 233 and 239 each coordinate Zn(2+). Disulfide bonds link C246–C254 and C374–C394. A Disintegrin domain is found at 315-402; it reads LGTCGNGIVE…KCPVDENWDD (88 aa). A glycan (N-linked (GlcNAc...) asparagine) is linked at N432.

Zn(2+) serves as cofactor. Post-translationally, glycosylated.

The protein resides in the endoplasmic reticulum. The protein localises to the spore wall. Its function is as follows. Has a role in the development of the spore envelope. This is Zinc metalloprotease mde10 (mde10) from Schizosaccharomyces pombe (strain 972 / ATCC 24843) (Fission yeast).